The sequence spans 565 residues: Periplasmic trehalase (565 aa).

A signal peptide spans 1–30 (MKSPAPSRPQKMALIPACIFLCFAALSVQA). Residues Arg-152, 159-160 (WD), Asn-196, 205-207 (RSQ), 277-279 (RPE), and Gly-310 each bind substrate. Active-site proton donor/acceptor residues include Asp-312 and Glu-496. Glu-511 provides a ligand contact to substrate. The interval 538–565 (PCDNVPATRPTVKSATTQPSTKEAQPTP) is disordered. A compositionally biased stretch (polar residues) spans 548–565 (TVKSATTQPSTKEAQPTP).

It belongs to the glycosyl hydrolase 37 family. In terms of assembly, monomer.

The protein resides in the periplasm. The catalysed reaction is alpha,alpha-trehalose + H2O = alpha-D-glucose + beta-D-glucose. In terms of biological role, provides the cells with the ability to utilize trehalose at high osmolarity by splitting it into glucose molecules that can subsequently be taken up by the phosphotransferase-mediated uptake system. In Escherichia coli (strain 55989 / EAEC), this protein is Periplasmic trehalase.